A 60-amino-acid chain; its full sequence is Large ribosomal subunit protein uL30 (60 aa).

It belongs to the universal ribosomal protein uL30 family. As to quaternary structure, part of the 50S ribosomal subunit.

In Leifsonia xyli subsp. xyli (strain CTCB07), this protein is Large ribosomal subunit protein uL30.